We begin with the raw amino-acid sequence, 534 residues long: NAD(P)H-quinone oxidoreductase chain 4 (534 aa).

The next 14 membrane-spanning stretches (helical) occupy residues 6 to 26, 38 to 58, 91 to 111, 117 to 137, 138 to 158, 171 to 191, 214 to 234, 245 to 265, 279 to 299, 316 to 336, 337 to 357, 377 to 399, 419 to 439, and 466 to 486; these read FPWL…LPFI, WYAL…FYTQ, MPLI…SWPV, LFYF…AVQD, LLVF…LLSI, FILY…AMAF, LLCY…VPLH, TAPV…YALI, FAPA…LTSF, MGFV…GAVL, QMVS…ATYD, IFAM…GFVA, VPVV…LLSM, and IFVI…PKII.

This sequence belongs to the complex I subunit 4 family.

Its subcellular location is the cellular thylakoid membrane. It carries out the reaction a plastoquinone + NADH + (n+1) H(+)(in) = a plastoquinol + NAD(+) + n H(+)(out). It catalyses the reaction a plastoquinone + NADPH + (n+1) H(+)(in) = a plastoquinol + NADP(+) + n H(+)(out). NDH-1 shuttles electrons from NAD(P)H, via FMN and iron-sulfur (Fe-S) centers, to quinones in the respiratory chain. The immediate electron acceptor for the enzyme in this species is believed to be plastoquinone. Couples the redox reaction to proton translocation (for every two electrons transferred, four hydrogen ions are translocated across the cytoplasmic membrane), and thus conserves the redox energy in a proton gradient. This is NAD(P)H-quinone oxidoreductase chain 4 from Acaryochloris marina (strain MBIC 11017).